A 397-amino-acid chain; its full sequence is Beta-lactamase (397 aa).

The signal sequence occupies residues 1 to 26; sequence MRDTRFPCLCGIAASTLLFATTPAIA. Serine 90 serves as the catalytic Acyl-ester intermediate. Positions 90, 146, 177, 179, and 370 each coordinate a beta-lactam. Catalysis depends on tyrosine 177, which acts as the Proton acceptor.

It belongs to the class-C beta-lactamase family. As to quaternary structure, monomer.

It is found in the periplasm. The catalysed reaction is a beta-lactam + H2O = a substituted beta-amino acid. Functionally, class C beta-lactamase which confers resistance to penicillins and cephalosporins. Has nitrocefin-hydrolyzing activity. The polypeptide is Beta-lactamase (ampC) (Pseudomonas aeruginosa (strain ATCC 15692 / DSM 22644 / CIP 104116 / JCM 14847 / LMG 12228 / 1C / PRS 101 / PAO1)).